Reading from the N-terminus, the 430-residue chain is Xaa-Pro aminopeptidase (430 aa).

Mn(2+) contacts are provided by aspartate 254, aspartate 265, histidine 348, glutamate 377, and glutamate 400.

It belongs to the peptidase M24B family. As to quaternary structure, homotetramer. Mn(2+) serves as cofactor.

The enzyme catalyses Release of any N-terminal amino acid, including proline, that is linked to proline, even from a dipeptide or tripeptide.. The sequence is that of Xaa-Pro aminopeptidase (pepP) from Haemophilus influenzae (strain ATCC 51907 / DSM 11121 / KW20 / Rd).